Here is a 181-residue protein sequence, read N- to C-terminus: Reverse rubrerythrin-1 (181 aa).

The region spanning 1–35 is the Rubredoxin-like domain; that stretch reads MKKFKCVVCGYIYTGEDAPEKCPVCGAGKDKFVEV. Fe cation is bound by residues Cys6, Cys9, Cys22, Cys25, Glu69, Glu102, Glu132, Glu165, and His168. The Ferritin-like diiron domain maps to 52–181; sequence KGVDKEVLEG…FRGLLNRYFK (130 aa).

In terms of assembly, homodimer. Fe(3+) is required as a cofactor.

The enzyme catalyses H2O2 + NADH + H(+) = NAD(+) + 2 H2O. In terms of biological role, functions as the terminal component of an NADH peroxidase (NADH:H(2)O(2) oxidoreductase) when using NADH:rubredoxin oxidoreductase (NROR) and rubredoxin (Rd) as electron transport intermediaries from NADH to revRbr 1. Plays an important role in the oxidative stress defense system in C.acetobutylicum, an obligate anaerobic bacterium. Also exhibits NADH oxidase (NADH:O(2) oxidoreductase) activity in vitro, which is 100-fold lesser than that of FprA1/2 using the same electron transfer components. Therefore, its predominant function is most likely as a scavenger of its preferred substrate, H(2)O(2). The sequence is that of Reverse rubrerythrin-1 (rbr3A) from Clostridium acetobutylicum (strain ATCC 824 / DSM 792 / JCM 1419 / IAM 19013 / LMG 5710 / NBRC 13948 / NRRL B-527 / VKM B-1787 / 2291 / W).